The sequence spans 96 residues: ESAT-6-like protein SAG0230 (96 aa).

It belongs to the WXG100 family. sagEsxA-like subfamily. In terms of assembly, homodimer.

The polypeptide is ESAT-6-like protein SAG0230 (Streptococcus agalactiae serotype V (strain ATCC BAA-611 / 2603 V/R)).